Reading from the N-terminus, the 416-residue chain is MNAEIIAVGSELLLGQIANTNAQFLSEKLAELGINVYFHTVVGDNAGRLEQAVRVAQARAELIIFTGGLGPTKDDLTKETIARLLGRELVIDEEALRSIEAYFARTNRTMTENNKKQALVLQGSTILKNEHGMAPGMAITLNSITYMLLPGPPKEMQPMFLKYGRPFLMEQLGRHERIESRVLRFFGIGESQLETDIEDLIDQQSNPTIAPLAGDGEVALRLTAKHHSEIEAKKLLDKAEQAILERVGRYFYGYNDETLFKKTVKMLKEKKKTIAAAESLTGGLFLTELTAIPGASQVVRGGVVCYANEVKEKVLHVPASVLTTDGAVSERCAQLLAENVRTLCHADIGISFTGVAGPDPLEGKPVGTVYIGISTPENETEVYALALPGQRDAIRIRTAKYGCSIILKKLAAAYEG.

This sequence belongs to the CinA family.

The sequence is that of Putative competence-damage inducible protein from Geobacillus sp. (strain WCH70).